The following is a 478-amino-acid chain: Tubulin gamma chain (478 aa).

141–147 (AGGTGSG) is a GTP binding site. The disordered stretch occupies residues 451–478 (ISQKESSSLANENGNGANNKPGKSAMAL). Positions 459-468 (LANENGNGAN) are enriched in polar residues.

It belongs to the tubulin family.

The protein resides in the cytoplasm. Its subcellular location is the cytoskeleton. It localises to the microtubule organizing center. It is found in the centrosome. Tubulin is the major constituent of microtubules. The gamma chain is found at microtubule organizing centers (MTOC) such as the spindle poles or the centrosome, suggesting that it is involved in the minus-end nucleation of microtubule assembly. The protein is Tubulin gamma chain of Reticulomyxa filosa.